A 319-amino-acid chain; its full sequence is MSLNFLDFEQPIAELEAKIDSLTAVSRQDEKLDINIDEEVHRLREKSVELTRKIFADLGAWQIAQLARHPQRPYTLDYVRLAFDEFDELAGDRAYADDKAIVGGIARLDGRPVMIIGHQKGRETKEKIRRNFGMPAPEGYRKALRLMQMAERFKMPIITFIDTPGAYPGVGAEERGQSEAIARNLREMSRLGVPVVCTVIGEGGSGGALAIGVGDKVNMLQYSTYSVISPEGCASILWKSADKAPLAAEAMGIIAPRLKELKLIDSIIPEPLGGAHRNPEAMAASLKAQLLADLADLDVLSTEDLKNRRYQRLMSYGYA.

Positions 35 to 296 (NIDEEVHRLR…KAQLLADLAD (262 aa)) constitute a CoA carboxyltransferase C-terminal domain.

It belongs to the AccA family. As to quaternary structure, acetyl-CoA carboxylase is a heterohexamer composed of biotin carboxyl carrier protein (AccB), biotin carboxylase (AccC) and two subunits each of ACCase subunit alpha (AccA) and ACCase subunit beta (AccD).

It is found in the cytoplasm. The catalysed reaction is N(6)-carboxybiotinyl-L-lysyl-[protein] + acetyl-CoA = N(6)-biotinyl-L-lysyl-[protein] + malonyl-CoA. Its pathway is lipid metabolism; malonyl-CoA biosynthesis; malonyl-CoA from acetyl-CoA: step 1/1. Functionally, component of the acetyl coenzyme A carboxylase (ACC) complex. First, biotin carboxylase catalyzes the carboxylation of biotin on its carrier protein (BCCP) and then the CO(2) group is transferred by the carboxyltransferase to acetyl-CoA to form malonyl-CoA. The chain is Acetyl-coenzyme A carboxylase carboxyl transferase subunit alpha from Escherichia coli O139:H28 (strain E24377A / ETEC).